The chain runs to 147 residues: Mediator of RNA polymerase II transcription subunit 10 (147 aa).

The protein belongs to the Mediator complex subunit 10 family. As to quaternary structure, component of the Mediator complex.

It is found in the nucleus. Its function is as follows. Component of the Mediator complex, a coactivator involved in the regulated transcription of nearly all RNA polymerase II-dependent genes. Mediator functions as a bridge to convey information from gene-specific regulatory proteins to the basal RNA polymerase II transcription machinery. Mediator is recruited to promoters by direct interactions with regulatory proteins and serves as a scaffold for the assembly of a functional preinitiation complex with RNA polymerase II and the general transcription factors. The protein is Mediator of RNA polymerase II transcription subunit 10 (NUT2) of Debaryomyces hansenii (strain ATCC 36239 / CBS 767 / BCRC 21394 / JCM 1990 / NBRC 0083 / IGC 2968) (Yeast).